The following is a 339-amino-acid chain: Tetracenomycin polyketide synthesis 8-O-methyl transferase TcmO (339 aa).

S-adenosyl-L-methionine-binding positions include Asp-200 and 226–228; that span reads GDF. Residue His-246 is the Proton acceptor of the active site.

The protein belongs to the class I-like SAM-binding methyltransferase superfamily. Cation-independent O-methyltransferase family.

It functions in the pathway antibiotic biosynthesis; tetracenomycin C biosynthesis. In Streptomyces glaucescens, this protein is Tetracenomycin polyketide synthesis 8-O-methyl transferase TcmO (tcmO).